The chain runs to 75 residues: uncharacterized protein (75 aa).

Residues 29-72 (EVYHVESGDTLWTIAKSFEIPVQQLMNLNKLSSDRIYPGQIIKI) form the LysM domain.

This is an uncharacterized protein from Bacillus subtilis (strain 168).